A 328-amino-acid chain; its full sequence is Acyl-CoA wax alcohol acyltransferase 1 (328 aa).

Helical transmembrane passes span 12–32 and 34–53; these read SLML…LQPL and VYLL…AWLF.

This sequence belongs to the diacylglycerol acyltransferase family. Predominantly expressed in skin, where it is limited to the sebaceous gland. Expressed in more mature, centrally located cells just before their rupture and sebum release. Also expressed in all tissues except spleen. Expressed at higher level in thymus, prostate and testis.

It is found in the endoplasmic reticulum membrane. The enzyme catalyses a long chain fatty alcohol + a fatty acyl-CoA = a wax ester + CoA. It carries out the reaction 1,2-di-(9Z-octadecenoyl)-sn-glycerol + (9Z)-octadecenoyl-CoA = 1,2,3-tri-(9Z-octadecenoyl)-glycerol + CoA. It catalyses the reaction hexadecan-1-ol + (9Z)-octadecenoyl-CoA = hexadecanyl (9Z)-octadecenoate + CoA. The catalysed reaction is decan-1-ol + (9Z)-octadecenoyl-CoA = 1-O-decyl-(9Z)-octadecenoate + CoA. The enzyme catalyses (9Z)-hexadecen-1-ol + (9Z)-octadecenoyl-CoA = 1-O-(9Z)-hexadecenyl (9Z)-octadecenoate + CoA. It carries out the reaction octadecan-1-ol + (9Z)-octadecenoyl-CoA = 1-O-octadecyl (9Z)-octadecenoate + CoA. It catalyses the reaction (9Z)-octadecen-1-ol + (9Z)-octadecenoyl-CoA = 1-O-(9Z)-octadecenyl (9Z)-octadecenoate + CoA. The catalysed reaction is hexadecan-1-ol + hexadecanoyl-CoA = hexadecanyl hexadecanoate + CoA. The enzyme catalyses hexadecan-1-ol + (9Z)-hexadecenoyl-CoA = 1-O-hexadecyl (9Z)-hexadecenoate + CoA. It carries out the reaction hexadecan-1-ol + octadecanoyl-CoA = hexadecanyl octadecanoate + CoA. It catalyses the reaction eicosan-1-ol + (9Z)-octadecenoyl-CoA = 1-O-eicosanyl (9Z)-octadecenoate + CoA. Acyltransferase that catalyzes the formation of ester bonds between fatty alcohols and fatty acyl-CoAs to form wax monoesters. Shows a strong preference for decyl alcohol (C10), with less activity towards C16 and C18 alcohols. Shows a strong preference for saturated acyl-CoAs. The polypeptide is Acyl-CoA wax alcohol acyltransferase 1 (AWAT1) (Homo sapiens (Human)).